A 429-amino-acid chain; its full sequence is Ribosomal RNA small subunit methyltransferase B (429 aa).

S-adenosyl-L-methionine contacts are provided by residues 254–260, aspartate 277, aspartate 303, and aspartate 322; that span reads CAAPGGK. The active-site Nucleophile is the cysteine 375.

This sequence belongs to the class I-like SAM-binding methyltransferase superfamily. RsmB/NOP family.

It is found in the cytoplasm. It catalyses the reaction cytidine(967) in 16S rRNA + S-adenosyl-L-methionine = 5-methylcytidine(967) in 16S rRNA + S-adenosyl-L-homocysteine + H(+). Its function is as follows. Specifically methylates the cytosine at position 967 (m5C967) of 16S rRNA. The chain is Ribosomal RNA small subunit methyltransferase B from Erwinia tasmaniensis (strain DSM 17950 / CFBP 7177 / CIP 109463 / NCPPB 4357 / Et1/99).